The sequence spans 432 residues: Amino-acid acetyltransferase (432 aa).

Residues 286 to 425 (EQLREAGIED…ASLYNFQRNS (140 aa)) enclose the N-acetyltransferase domain.

This sequence belongs to the acetyltransferase family. ArgA subfamily.

Its subcellular location is the cytoplasm. The catalysed reaction is L-glutamate + acetyl-CoA = N-acetyl-L-glutamate + CoA + H(+). Its pathway is amino-acid biosynthesis; L-arginine biosynthesis; N(2)-acetyl-L-ornithine from L-glutamate: step 1/4. The chain is Amino-acid acetyltransferase from Pseudomonas paraeruginosa (strain DSM 24068 / PA7) (Pseudomonas aeruginosa (strain PA7)).